The chain runs to 294 residues: Shikimate kinase (294 aa).

Pro-87–Ala-97 is a binding site for ATP.

The protein belongs to the GHMP kinase family. Archaeal shikimate kinase subfamily.

The protein resides in the cytoplasm. It catalyses the reaction shikimate + ATP = 3-phosphoshikimate + ADP + H(+). It functions in the pathway metabolic intermediate biosynthesis; chorismate biosynthesis; chorismate from D-erythrose 4-phosphate and phosphoenolpyruvate: step 5/7. The protein is Shikimate kinase (aroK) of Methanosarcina acetivorans (strain ATCC 35395 / DSM 2834 / JCM 12185 / C2A).